Here is a 325-residue protein sequence, read N- to C-terminus: tRNA N(3)-methylcytidine methyltransferase Mettl2 (325 aa).

The S-adenosyl-L-methionine site is built by Trp-96 and Tyr-100. Tyr-100, His-112, Glu-138, Gly-140, Asp-165, Asp-191, and Ile-212 together coordinate S-adenosyl-L-homocysteine. Residues Gly-140, Asp-165, Asp-191, and Ile-212 each coordinate S-adenosyl-L-methionine.

Belongs to the methyltransferase superfamily. METL family. In terms of assembly, interacts with Psn. Widely expressed. Expressed in ovaries, head, thorax and abdomen of adult flies, and in the CNS of third instar larvae. Isoform 2 is predominantly expressed in larvae and in adult tissues that have been tested.

Its function is as follows. Probable methyltransferase. The chain is tRNA N(3)-methylcytidine methyltransferase Mettl2 from Drosophila melanogaster (Fruit fly).